A 582-amino-acid polypeptide reads, in one-letter code: A-type ATP synthase subunit A 1 (582 aa).

An ATP-binding site is contributed by Gly-231 to Thr-238.

It belongs to the ATPase alpha/beta chains family. Has multiple subunits with at least A(3), B(3), C, D, E, F, H, I and proteolipid K(x).

It localises to the cell membrane. The catalysed reaction is ATP + H2O + 4 H(+)(in) = ADP + phosphate + 5 H(+)(out). Functionally, component of the A-type ATP synthase that produces ATP from ADP in the presence of a proton gradient across the membrane. The A chain is the catalytic subunit. The chain is A-type ATP synthase subunit A 1 from Methanospirillum hungatei JF-1 (strain ATCC 27890 / DSM 864 / NBRC 100397 / JF-1).